Here is a 504-residue protein sequence, read N- to C-terminus: ATP synthase subunit alpha 1 (504 aa).

170-177 (GDRQIGKT) contacts ATP.

It belongs to the ATPase alpha/beta chains family. F-type ATPases have 2 components, CF(1) - the catalytic core - and CF(0) - the membrane proton channel. CF(1) has five subunits: alpha(3), beta(3), gamma(1), delta(1), epsilon(1). CF(0) has three main subunits: a(1), b(2) and c(9-12). The alpha and beta chains form an alternating ring which encloses part of the gamma chain. CF(1) is attached to CF(0) by a central stalk formed by the gamma and epsilon chains, while a peripheral stalk is formed by the delta and b chains.

The protein resides in the cell inner membrane. It catalyses the reaction ATP + H2O + 4 H(+)(in) = ADP + phosphate + 5 H(+)(out). Functionally, produces ATP from ADP in the presence of a proton gradient across the membrane. The alpha chain is a regulatory subunit. The protein is ATP synthase subunit alpha 1 of Syntrophus aciditrophicus (strain SB).